A 484-amino-acid polypeptide reads, in one-letter code: Hexokinase-2 (484 aa).

In terms of domain architecture, Hexokinase spans 21 to 467 (PQLLEALKPI…SGVGAAVIAA (447 aa)). Residues 75-208 (TGKETGSYLA…GVPIDVVALI (134 aa)) are hexokinase small subdomain. The segment at 209–456 (NDTTGTLVAS…DPIIIVPAED (248 aa)) is hexokinase large subdomain.

Belongs to the hexokinase family. Monomer.

The protein resides in the cytoplasm. The enzyme catalyses a D-hexose + ATP = a D-hexose 6-phosphate + ADP + H(+). It catalyses the reaction D-fructose + ATP = D-fructose 6-phosphate + ADP + H(+). It carries out the reaction D-glucose + ATP = D-glucose 6-phosphate + ADP + H(+). Its pathway is carbohydrate metabolism; hexose metabolism. It functions in the pathway carbohydrate degradation; glycolysis; D-glyceraldehyde 3-phosphate and glycerone phosphate from D-glucose: step 1/4. Its function is as follows. Catalyzes the phosphorylation of hexose, such as D-glucose and D-fructose, to hexose 6-phosphate (D-glucose 6-phosphate and D-fructose 6-phosphate, respectively). Mediates the initial step of glycolysis by catalyzing phosphorylation of D-glucose to D-glucose 6-phosphate. The polypeptide is Hexokinase-2 (HXK2) (Candida albicans (strain SC5314 / ATCC MYA-2876) (Yeast)).